The sequence spans 366 residues: GDSL esterase/lipase At1g74460 (366 aa).

A signal peptide spans 1–20; the sequence is MKFCAIFVLFIVLAINGYDC. Residue serine 30 is the Nucleophile of the active site. 2 N-linked (GlcNAc...) asparagine glycosylation sites follow: asparagine 113 and asparagine 260. Catalysis depends on residues aspartate 320 and histidine 323.

Belongs to the 'GDSL' lipolytic enzyme family.

It is found in the secreted. The chain is GDSL esterase/lipase At1g74460 from Arabidopsis thaliana (Mouse-ear cress).